The chain runs to 399 residues: Nitric oxide reductase (399 aa).

The interval 32–221 (HRGTTYNAYL…DEIQKINLAI (190 aa)) is zinc metallo-hydrolase. Residues His81, Glu83, Asp85, His148, Asp167, and His228 each contribute to the Fe cation site. The 140-residue stretch at 255-394 (AVIAYDTMWL…RCYELGRKIA (140 aa)) folds into the Flavodoxin-like domain.

This sequence in the N-terminal section; belongs to the zinc metallo-hydrolase group 3 family. In terms of assembly, homodimer. FMN is required as a cofactor. Fe cation serves as cofactor.

Functionally, has nitric oxide reductase activity in combination with Hrb; probably involved in nitrosative stress protection. This chain is Nitric oxide reductase (fprA), found in Moorella thermoacetica (strain ATCC 39073 / JCM 9320).